The primary structure comprises 817 residues: General transcription factor 3C polypeptide 4 (817 aa).

Position 1 is an N-acetylmethionine (Met1). Residues Met1 to Ser40 are disordered. Lys221 participates in a covalent cross-link: Glycyl lysine isopeptide (Lys-Gly) (interchain with G-Cter in SUMO2). 2 positions are modified to phosphoserine: Ser600 and Ser607. Residues Leu603–Glu658 are disordered. Lys624 is covalently cross-linked (Glycyl lysine isopeptide (Lys-Gly) (interchain with G-Cter in SUMO2)). At Ser647 the chain carries Phosphoserine.

It belongs to the TFIIIC subunit 4 family. In terms of assembly, part of the TFIIIC subcomplex TFIIIC2, consisting of six subunits, GTF3C1, GTF3C2, GTF3C3, GTF3C4, GTF3C5 and GTF3C6. Interacts with BRF1, GTF3C1, GTF3C2, GTF3C5, GTF3C6, POLR3C and POLR3F.

Its subcellular location is the nucleus. The catalysed reaction is L-lysyl-[protein] + acetyl-CoA = N(6)-acetyl-L-lysyl-[protein] + CoA + H(+). In terms of biological role, essential for RNA polymerase III to make a number of small nuclear and cytoplasmic RNAs, including 5S RNA, tRNA, and adenovirus-associated (VA) RNA of both cellular and viral origin. Has histone acetyltransferase activity (HAT) with unique specificity for free and nucleosomal H3. May cooperate with GTF3C5 in facilitating the recruitment of TFIIIB and RNA polymerase through direct interactions with BRF1, POLR3C and POLR3F. May be localized close to the A box. In Mus musculus (Mouse), this protein is General transcription factor 3C polypeptide 4 (Gtf3c4).